The following is a 211-amino-acid chain: Small ribosomal subunit protein uS3 (211 aa).

Residues 16–85 (IDEYFKGKLV…NPQIEVKPLE (70 aa)) form the KH type-2 domain.

Belongs to the universal ribosomal protein uS3 family. In terms of assembly, part of the 30S ribosomal subunit.

Functionally, binds the lower part of the 30S subunit head. In Methanococcus vannielii (strain ATCC 35089 / DSM 1224 / JCM 13029 / OCM 148 / SB), this protein is Small ribosomal subunit protein uS3.